A 1304-amino-acid chain; its full sequence is Neuronal cell adhesion molecule (1304 aa).

Residues 1 to 24 form the signal peptide; it reads MQLKIMPKKKRLSAGRVPLILFLC. The Extracellular portion of the chain corresponds to 25-1167; it reads QMISALEVPL…ASRQVDIATQ (1143 aa). Ig-like domains follow at residues 46–134 and 141–235; these read PTIT…AAVS and PSRS…QPIS. Intrachain disulfides connect Cys68/Cys123 and Cys167/Cys218. N-linked (GlcNAc...) asparagine glycosylation is present at Asn83. 5 N-linked (GlcNAc...) asparagine glycosylation sites follow: Asn223, Asn245, Asn251, Asn276, and Asn314. Ig-like domains are found at residues 267–356, 361–448, 454–541, and 545–632; these read PPTF…ISVR, PYWI…AFVN, PRIL…VHLE, and PTWI…AVLS. 2 disulfides stabilise this stretch: Cys292–Cys340 and Cys382–Cys432. N-linked (GlcNAc...) asparagine glycans are attached at residues Asn433 and Asn507. Intrachain disulfides connect Cys476–Cys525 and Cys567–Cys616. N-linked (GlcNAc...) asparagine glycans are attached at residues Asn619, Asn716, and Asn802. Fibronectin type-III domains follow at residues 649–744, 746–843, 848–950, 954–1051, and 1064–1156; these read PPFD…TKAS, PDKN…SGED, APGN…TPEG, APSS…VDEA, and QAVN…TGPA. Asn858 carries an N-linked (GlcNAc...) (complex) asparagine glycan. Residues Asn993, Asn1009, Asn1019, Asn1072, Asn1083, and Asn1115 are each glycosylated (N-linked (GlcNAc...) asparagine). The chain crosses the membrane as a helical span at residues 1168-1190; sequence GWFIGLMCAVALLILILLIVCFI. Over 1191 to 1304 the chain is Cytoplasmic; the sequence is RRNKGGKYPV…SPVNAMNSFV (114 aa). Residues 1199-1219 show a composition bias toward basic and acidic residues; sequence PVKEKEDAHADPEIQPMKEDD. The interval 1199–1304 is disordered; it reads PVKEKEDAHA…SPVNAMNSFV (106 aa). Residue Thr1221 is modified to Phosphothreonine. Tyr1225 carries the post-translational modification Phosphotyrosine. At Ser1226 the chain carries Phosphoserine. The segment covering 1241-1250 has biased composition (basic and acidic residues); that stretch reads PSDRTVKKED. Residues Ser1251, Ser1254, Ser1271, Ser1290, Ser1291, and Ser1295 each carry the phosphoserine modification. Residues 1288 to 1304 show a composition bias toward polar residues; sequence NESSEAPSPVNAMNSFV.

Belongs to the immunoglobulin superfamily. L1/neurofascin/NgCAM family. Constituent of a NFASC/NRCAM/ankyrin-G complex. Detected in a complex with CNTN1 and PTPRB. Interacts with GLDN/gliomedin. Interacts with MYOC. Detected in all the examined tissues. In the brain it was detected in the amygdala, caudate nucleus, corpus callosum, hippocampus, hypothalamus, substantia nigra, subthalamic nucleus and thalamus.

It is found in the cell membrane. It localises to the cell projection. Its subcellular location is the axon. The protein localises to the secreted. Cell adhesion protein that is required for normal responses to cell-cell contacts in brain and in the peripheral nervous system. Plays a role in neurite outgrowth in response to contactin binding. Plays a role in mediating cell-cell contacts between Schwann cells and axons. Plays a role in the formation and maintenance of the nodes of Ranvier on myelinated axons. Nodes of Ranvier contain clustered sodium channels that are crucial for the saltatory propagation of action potentials along myelinated axons. During development, nodes of Ranvier are formed by the fusion of two heminodes. Required for normal clustering of sodium channels at heminodes; not required for the formation of mature nodes with normal sodium channel clusters. Required, together with GLDN, for maintaining NFASC and sodium channel clusters at mature nodes of Ranvier. The sequence is that of Neuronal cell adhesion molecule (NRCAM) from Homo sapiens (Human).